Here is a 536-residue protein sequence, read N- to C-terminus: 3',5'-cyclic-AMP phosphodiesterase 4C (536 aa).

A disordered region spans residues 49–69 (QALLGTPPQSSQQAAPAEESG). In terms of domain architecture, PDEase spans 178–507 (VQTDQEEQLA…EWYQSRVPCS (330 aa)). The active-site Proton donor is histidine 254. Position 254 (histidine 254) interacts with 3',5'-cyclic AMP. AMP-binding residues include histidine 254 and histidine 258. Positions 258, 294, 295, and 412 each coordinate Zn(2+). Residues aspartate 295, aspartate 412, glutamine 463, and phenylalanine 466 each contribute to the AMP site. Aspartate 295 contributes to the Mg(2+) binding site. Mn(2+) is bound at residue aspartate 295. The 3',5'-cyclic AMP site is built by glutamine 463 and phenylalanine 466. Serine 507 bears the Phosphoserine mark.

This sequence belongs to the cyclic nucleotide phosphodiesterase family. PDE4 subfamily. Part of a complex containing AKAP5, ADCY5, ADCY6 and PKD2. It depends on Zn(2+) as a cofactor. The cofactor is Mg(2+). Mn(2+) serves as cofactor.

Its subcellular location is the cell projection. The protein resides in the cilium. It carries out the reaction 3',5'-cyclic AMP + H2O = AMP + H(+). It participates in purine metabolism; 3',5'-cyclic AMP degradation; AMP from 3',5'-cyclic AMP: step 1/1. Its function is as follows. Hydrolyzes the second messenger cAMP, which is a key regulator of many important physiological processes. The chain is 3',5'-cyclic-AMP phosphodiesterase 4C from Rattus norvegicus (Rat).